The sequence spans 262 residues: MRKHPFHLVDPSPWPLLASFAAFLSTTGGVMYMHAYSGGGLLLAIGQLSLFYVMYVWWRDVIREGTYQGHHTNPVQVGLRYGMLLFILSEIMFFFAFFWAFFHSSLAPTIEIGAVWPPKGIQVLNPWEIPFLNTIILLTSGASVTWAHHAILAGNRKQGIISLAITVLLAVIFTGFQALEYLEAPFTISDGIYGSTFYLATGFHGFHVIIGTIFIAVCLFRLVLHHFSKSHHLGFEAAAWYWHMVDVVWLFLFVCIYYWGGA.

A run of 7 helical transmembrane segments spans residues 13–33 (PWPLLASFAAFLSTTGGVMYM), 38–58 (GGGLLLAIGQLSLFYVMYVWW), 82–102 (GMLLFILSEIMFFFAFFWAFF), 134–154 (TIILLTSGASVTWAHHAILAG), 159–179 (GIISLAITVLLAVIFTGFQAL), 200–220 (ATGFHGFHVIIGTIFIAVCLF), and 237–257 (AAAWYWHMVDVVWLFLFVCIY).

This sequence belongs to the cytochrome c oxidase subunit 3 family. In terms of assembly, component of the cytochrome c oxidase (complex IV, CIV), a multisubunit enzyme composed of a catalytic core of 3 subunits and several supernumerary subunits. The complex exists as a monomer or a dimer and forms supercomplexes (SCs) in the inner mitochondrial membrane with ubiquinol-cytochrome c oxidoreductase (cytochrome b-c1 complex, complex III, CIII).

The protein resides in the mitochondrion inner membrane. The enzyme catalyses 4 Fe(II)-[cytochrome c] + O2 + 8 H(+)(in) = 4 Fe(III)-[cytochrome c] + 2 H2O + 4 H(+)(out). Component of the cytochrome c oxidase, the last enzyme in the mitochondrial electron transport chain which drives oxidative phosphorylation. The respiratory chain contains 3 multisubunit complexes succinate dehydrogenase (complex II, CII), ubiquinol-cytochrome c oxidoreductase (cytochrome b-c1 complex, complex III, CIII) and cytochrome c oxidase (complex IV, CIV), that cooperate to transfer electrons derived from NADH and succinate to molecular oxygen, creating an electrochemical gradient over the inner membrane that drives transmembrane transport and the ATP synthase. Cytochrome c oxidase is the component of the respiratory chain that catalyzes the reduction of oxygen to water. Electrons originating from reduced cytochrome c in the intermembrane space (IMS) are transferred via the dinuclear copper A center (CU(A)) of subunit 2 and heme A of subunit 1 to the active site in subunit 1, a binuclear center (BNC) formed by heme A3 and copper B (CU(B)). The BNC reduces molecular oxygen to 2 water molecules using 4 electrons from cytochrome c in the IMS and 4 protons from the mitochondrial matrix. This chain is Cytochrome c oxidase subunit 3 (COX3), found in Prototheca wickerhamii.